Reading from the N-terminus, the 357-residue chain is Peptide chain release factor 1 (357 aa).

Residue glutamine 233 is modified to N5-methylglutamine.

This sequence belongs to the prokaryotic/mitochondrial release factor family. In terms of processing, methylated by PrmC. Methylation increases the termination efficiency of RF1.

Its subcellular location is the cytoplasm. Peptide chain release factor 1 directs the termination of translation in response to the peptide chain termination codons UAG and UAA. This is Peptide chain release factor 1 from Syntrophus aciditrophicus (strain SB).